A 70-amino-acid polypeptide reads, in one-letter code: Palustrin-2ISa (70 aa).

An N-terminal signal peptide occupies residues 1–22 (MFTLKKSLLLLFFLGTISLSLC). Residues 23 to 39 (EQERSAEDEGEVIEEEV) constitute a propeptide, removed in mature form. An intrachain disulfide couples C64 to C70.

As to expression, expressed by the skin glands.

Its subcellular location is the secreted. Has antimicrobial activity against Gram-negative bacterium E.coli ATCC 8739 (MIC=100 ug), against Gram positive bacteria S.aureus ATCC 6538 (MIC=25 ug), methicillin-resistant S.aureus ATCC 43300 (MIC=100 ug), B.subtilis ATCC 6633 (MIC=12.5 ug) and against fungus C.albicans ATCC 90028 (MIC=100 ug). The sequence is that of Palustrin-2ISa from Odorrana ishikawae (Ishikawa's frog).